The following is a 150-amino-acid chain: 3-hydroxyacyl-[acyl-carrier-protein] dehydratase FabZ (150 aa).

His54 is a catalytic residue.

This sequence belongs to the thioester dehydratase family. FabZ subfamily.

Its subcellular location is the cytoplasm. It carries out the reaction a (3R)-hydroxyacyl-[ACP] = a (2E)-enoyl-[ACP] + H2O. Involved in unsaturated fatty acids biosynthesis. Catalyzes the dehydration of short chain beta-hydroxyacyl-ACPs and long chain saturated and unsaturated beta-hydroxyacyl-ACPs. The sequence is that of 3-hydroxyacyl-[acyl-carrier-protein] dehydratase FabZ from Vibrio atlanticus (strain LGP32) (Vibrio splendidus (strain Mel32)).